Reading from the N-terminus, the 206-residue chain is Thymidylate kinase (206 aa).

10 to 17 (GIDGAGKS) lines the ATP pocket.

It belongs to the thymidylate kinase family.

The catalysed reaction is dTMP + ATP = dTDP + ADP. Phosphorylation of dTMP to form dTDP in both de novo and salvage pathways of dTTP synthesis. This is Thymidylate kinase (tmk) from Neisseria meningitidis serogroup B (strain ATCC BAA-335 / MC58).